We begin with the raw amino-acid sequence, 199 residues long: Probable nicotinate-nucleotide adenylyltransferase (199 aa).

It belongs to the NadD family.

It carries out the reaction nicotinate beta-D-ribonucleotide + ATP + H(+) = deamido-NAD(+) + diphosphate. It participates in cofactor biosynthesis; NAD(+) biosynthesis; deamido-NAD(+) from nicotinate D-ribonucleotide: step 1/1. Catalyzes the reversible adenylation of nicotinate mononucleotide (NaMN) to nicotinic acid adenine dinucleotide (NaAD). This is Probable nicotinate-nucleotide adenylyltransferase from Roseiflexus sp. (strain RS-1).